We begin with the raw amino-acid sequence, 226 residues long: MLLKIPNVLSKEQVETAKSKLLDADWADGNITAGYQSAKAKNNLQLPENSPIAIELGDIVLTALAQNNMFMSAALPLKIFPPLFNCYQGGRSFGVHVDNAIRQVPGTPVKVRTDISMTLFLSEPDEYEGGELVIEDTYGSQSVKLAAGDMVLYPATSLHSVTPVTKGRRLASFFWLQSMVNSDEKRTLLFDMDMAIQSLRAQVDDSPEIVQLTGVYHNLLRQWAQT.

The Fe2OG dioxygenase domain maps to 78-178; sequence KIFPPLFNCY…RLASFFWLQS (101 aa). The Fe cation site is built by His-96, Asp-98, and His-159. Arg-169 is a 2-oxoglutarate binding site.

The cofactor is Fe(2+). L-ascorbate serves as cofactor.

This Saccharophagus degradans (strain 2-40 / ATCC 43961 / DSM 17024) protein is PKHD-type hydroxylase Sde_2812.